The sequence spans 274 residues: Bis(5'-nucleosyl)-tetraphosphatase, symmetrical (274 aa).

It belongs to the Ap4A hydrolase family.

The catalysed reaction is P(1),P(4)-bis(5'-adenosyl) tetraphosphate + H2O = 2 ADP + 2 H(+). Hydrolyzes diadenosine 5',5'''-P1,P4-tetraphosphate to yield ADP. The polypeptide is Bis(5'-nucleosyl)-tetraphosphatase, symmetrical (Shewanella sp. (strain ANA-3)).